We begin with the raw amino-acid sequence, 196 residues long: ATP-dependent Clp protease proteolytic subunit (196 aa).

The active-site Nucleophile is the S98. H123 is an active-site residue.

Belongs to the peptidase S14 family. As to quaternary structure, fourteen ClpP subunits assemble into 2 heptameric rings which stack back to back to give a disk-like structure with a central cavity, resembling the structure of eukaryotic proteasomes.

Its subcellular location is the cytoplasm. The enzyme catalyses Hydrolysis of proteins to small peptides in the presence of ATP and magnesium. alpha-casein is the usual test substrate. In the absence of ATP, only oligopeptides shorter than five residues are hydrolyzed (such as succinyl-Leu-Tyr-|-NHMec, and Leu-Tyr-Leu-|-Tyr-Trp, in which cleavage of the -Tyr-|-Leu- and -Tyr-|-Trp bonds also occurs).. Functionally, cleaves peptides in various proteins in a process that requires ATP hydrolysis. Has a chymotrypsin-like activity. Plays a major role in the degradation of misfolded proteins. The sequence is that of ATP-dependent Clp protease proteolytic subunit from Actinobacillus pleuropneumoniae serotype 5b (strain L20).